The following is a 562-amino-acid chain: Solute carrier family 22 member 6 (562 aa).

Topologically, residues 1 to 15 (MPFSELLEQVGSTGR) are cytoplasmic. A helical membrane pass occupies residues 16–36 (FQVLHVTLLCIPVLMMASHNL). The Extracellular segment spans residues 37-147 (LQNFVATVPS…LVCDMHSFKQ (111 aa)). A helical membrane pass occupies residues 148 to 168 (MGQTIYMGGVLVGALLFGGLS). The Cytoplasmic portion of the chain corresponds to 169-174 (DRYGRR). Residues 175 to 195 (ILLLISNLLMAVSGTCAAFSS) traverse the membrane as a helical segment. Over 196 to 205 (SFSLFCVFRF) the chain is Extracellular. Residues 206–226 (GCGLALSGLGLNTFSLIVEWI) traverse the membrane as a helical segment. Over 227 to 235 (PTRIRTAVG) the chain is Cytoplasmic. A helical transmembrane segment spans residues 236-256 (TTTGYCYTLGQLILVLLAYFI). The Extracellular segment spans residues 257-260 (RDWR). The helical transmembrane segment at 261 to 281 (WLTLAVSLPFYVFFLIAWWFH) threads the bilayer. The Cytoplasmic portion of the chain corresponds to 282–351 (ESSRWLALSN…FNTPAMRKRT (70 aa)). The chain crosses the membrane as a helical span at residues 352–372 (LCLSAVWLSTSFAYYGLAMDL). At 373–378 (DKFGVD) the chain is on the extracellular side. The helical transmembrane segment at 379 to 399 (IYLIQVIFGAVDIPAKVVVVV) threads the bilayer. The Cytoplasmic portion of the chain corresponds to 400–408 (SMSLIGRRR). A helical membrane pass occupies residues 409 to 429 (SQCAVLVVAGITILLNLLVPY). The Extracellular segment spans residues 430-444 (DKQTIRTCLAVLGKG). A helical transmembrane segment spans residues 445 to 465 (CLAASFNCCYLYSGELFPTII). Over 466 to 468 (RQN) the chain is Cytoplasmic. A helical transmembrane segment spans residues 469 to 489 (GMGWVSMMARIGAMVAPMVLL). The Extracellular segment spans residues 490 to 495 (TRDYIP). A helical transmembrane segment spans residues 496-516 (WLPGLIYGGAPILSGLAAIFL). Residues 517–562 (PETLGYPLPDTIQDVEESGSGRKSKMSTKETITLQDKQANLLKQSA) lie on the Cytoplasmic side of the membrane.

Belongs to the major facilitator (TC 2.A.1) superfamily. Organic cation transporter (TC 2.A.1.19) family. Post-translationally, glycosylated. Glycosylation is necessary for proper targeting of the transporter to the plasma membrane.

The protein resides in the cell membrane. Its subcellular location is the basolateral cell membrane. It is found in the basal cell membrane. Involved in the renal elimination of endogenous and exogenous organic anions. Functions as organic anion exchanger when the uptake of one molecule of organic anion is coupled with an efflux of one molecule of endogenous dicarboxylic acid (glutarate, ketoglutarate, etc). Mediates the sodium-independent uptake of p-aminohippurate (PAH), 2,3-dimercapto-1-propanesulfonic acid (DMPS), cidofovir, adefovir, 9-(2-phosphonylmethoxyethyl) guanine (PMEG), 9-(2-phosphonylmethoxyethyl) diaminopurine (PMEDAP), ochratoxin (OTA), acyclovir (ACV), 3'-azido-3-'deoxythymidine (AZT), cimetidine (CMD), 2,4-dichloro-phenoxyacetate (2,4-D), hippurate (HA), indoleacetate (IA), indoxyl sulfate (IS), 3-carboxy-4-methyl-5-propyl-2-furanpropionate (CMPF) and edaravone sulfate. Mediates the sodium-independent uptake of p-aminohippurate (PAH). PAH uptake is inhibited by p-chloromercuribenzenesulphonate (PCMBS), diethyl pyrocarbonate (DEPC), indomethacin, sulindac, diclofenac, carprofen, okadaic acid, benzothiazolylcysteine (BTC), S-chlorotrifluoroethylcysteine (CTFC), cysteine S-conjugates S-dichlorovinylcysteine (DCVC), furosemide, steviol, phorbol 12-myristate 13-acetate (PMA), calcium ionophore A23187, benzylpenicillin, bumetamide, losartan, probenecid, phenol red, urate, glutarate and alpha-ketoglutarate. PAH uptake is inhibited by glutarate. This is Solute carrier family 22 member 6 (SLC22A6) from Pseudopleuronectes americanus (Winter flounder).